The following is an 834-amino-acid chain: uncharacterized protein (834 aa).

3 disordered regions span residues 1 to 38 (MGSLDYSSKNNSSLGSISSDDESIVLDNENNGAPKAQP), 166 to 280 (DLSS…TPQE), and 767 to 787 (ISRVTPSPPGGATKVRENFHP). Low complexity-rich tracts occupy residues 7 to 18 (SSKNNSSLGSIS) and 166 to 252 (DLSS…SSSS).

It belongs to the IIV-6 268L family.

This is an uncharacterized protein from Invertebrate iridescent virus 3 (IIV-3).